The chain runs to 603 residues: Insulin-like growth factor-binding protein complex acid labile subunit (603 aa).

Residues 1 to 23 (MALRTGGPALVVLLAFWVALGPC) form the signal peptide. In terms of domain architecture, LRRNT spans 32–74 (ASADAEGPQCPVACTCSHDDYTDELSVFCSSKNLTHLPDDIPV). Disulfide bonds link Cys-41–Cys-47 and Cys-45–Cys-60. Asn-64, Asn-85, and Asn-96 each carry an N-linked (GlcNAc...) asparagine glycan. LRR repeat units lie at residues 75 to 96 (STRA…AFQN), 99 to 120 (SLDF…ALLG), 123 to 144 (NLYY…LFTH), 147 to 168 (SLAS…LFQG), 171 to 192 (HLWD…VFQG), 195 to 216 (NLHE…LFCG), 219 to 240 (ELRE…VFVH), 243 to 264 (RLQK…AFLG), 267 to 288 (ALRW…TFPG), 291 to 312 (GLHV…TFKD), 315 to 336 (FLEE…TFEG), 339 to 360 (QLEV…AFSG), 363 to 384 (NVAV…VFQG), 387 to 408 (KLHS…TFAG), 411 to 432 (GLRR…SLAG), 435 to 456 (ELLE…LFQG), 459 to 480 (HLEY…VLGP), 483 to 504 (RAFW…LFSS), and 507 to 528 (RVRY…PGLE). Asn-368 is a glycosylation site (N-linked (GlcNAc...) asparagine). N-linked (GlcNAc...) asparagine glycosylation occurs at Asn-515. The 69-residue stretch at 535–603 (NPWDCSCPLK…DVSETHFVHC (69 aa)) folds into the LRRCT domain. Cystine bridges form between Cys-539-Cys-581, Cys-541-Cys-603, and Cys-565-Cys-570. N-linked (GlcNAc...) asparagine glycans are attached at residues Asn-578 and Asn-586.

Forms a ternary complex with IGF1 and IGFBP3. As to expression, brain, kidney, lung, heart, spleen, muscle and liver.

It localises to the secreted. It is found in the extracellular space. May have an important role in regulating the access of circulating IGFs to the tissues. The protein is Insulin-like growth factor-binding protein complex acid labile subunit (Igfals) of Rattus norvegicus (Rat).